Consider the following 335-residue polypeptide: Ferrochelatase (335 aa).

Residues histidine 207 and glutamate 288 each coordinate Fe cation.

The protein belongs to the ferrochelatase family.

It is found in the cytoplasm. It carries out the reaction heme b + 2 H(+) = protoporphyrin IX + Fe(2+). It participates in porphyrin-containing compound metabolism; protoheme biosynthesis; protoheme from protoporphyrin-IX: step 1/1. Catalyzes the ferrous insertion into protoporphyrin IX. In Helicobacter pylori (strain J99 / ATCC 700824) (Campylobacter pylori J99), this protein is Ferrochelatase.